The chain runs to 677 residues: Envelope glycoprotein (677 aa).

The N-terminal stretch at M1–S33 is a signal peptide. The Extracellular segment spans residues M34 to Q651. N-linked (GlcNAc...) asparagine; by host glycosylation is present at N41. Intrachain disulfides connect C54/C610, C109/C136, C122/C148, C512/C557, and C602/C609. The segment at R55–E202 is receptor-binding. 12 N-linked (GlcNAc...) asparagine; by host glycosylation sites follow: N205, N239, N258, N269, N297, N317, N318, N339, N406, N420, N435, and N463. The mucin-like region stretch occupies residues N306–T486. The span at H315–G326 shows a compositional bias: polar residues. 3 disordered regions span residues H315–P349, N370–T483, and K489–T508. 3 stretches are compositionally biased toward polar residues: residues N370–E421, M428–A445, and P458–G472. The interval G525–A540 is fusion peptide. The stretch at L555–Q596 forms a coiled coil. The N-linked (GlcNAc...) asparagine; by host glycan is linked to N564. Residues W616 to P635 are a coiled coil. N-linked (GlcNAc...) asparagine; by host glycosylation occurs at N619. The chain crosses the membrane as a helical span at residues W652–I672. 2 S-palmitoyl cysteine; by host lipidation sites follow: C671 and C673. At C673–C677 the chain is on the cytoplasmic side.

Belongs to the filoviruses glycoprotein family. In terms of assembly, homotrimer; each monomer consists of a GP1 and a GP2 subunit linked by disulfide bonds. The resulting peplomers (GP1,2) protrude from the virus surface as spikes. Interacts with host integrin alpha-V/ITGAV. Interacts with host CLEC10A. Binds also to host CD209 and CLEC4M/DC-SIGN(R). Interacts with host FOLR1. Interacts with BST2; this interaction inhibits the antiviral effect of BST2 and this allows viral release from infected cells. Interacts with host FCN1; this interaction enhances viral entry. Interacts with host TLR4; this interaction induces cell death in T-lymphocytes or proinflammatory cytokines and SOCS1 production in monocytes. Interacts with host entry receptor NPC1. As to quaternary structure, GP1 and GP2delta are part of GP1,2delta soluble complexes released by ectodomain shedding. Post-translationally, the signal peptide region modulates GP's high mannose glycosylation, thereby determining the efficiency of the interactions with DC-SIGN(R). N-glycosylated. In terms of processing, O-glycosylated in the mucin-like region. Post-translationally, palmitoylation of GP2 is not required for its function. Specific enzymatic cleavages in vivo yield mature proteins. The precursor is processed into GP1 and GP2 by host cell furin in the trans Golgi, and maybe by other host proteases, to yield the mature GP1 and GP2 proteins. The cleavage site corresponds to the furin optimal cleavage sequence [KR]-X-[KR]-R. This cleavage does not seem to be required for function. After the internalization of the virus into cell endosomes, GP1 C-terminus is removed by the endosomal proteases cathepsin B, cathepsin L, or both, leaving a 19-kDa N-terminal fragment which is further digested by cathepsin B. Proteolytic processing of GP1,2 by host ADAM17 can remove the transmembrane anchor of GP2 and leads to shedding of complexes consisting in GP1 and truncated GP2 (GP1,2delta).

It localises to the virion membrane. Its subcellular location is the host cell membrane. It is found in the secreted. Its function is as follows. Trimeric GP1,2 complexes form the virion surface spikes and mediate the viral entry processes, with GP1 acting as the receptor-binding subunit and GP2 as the membrane fusion subunit. At later times of infection, down-regulates the expression of various host cell surface molecules that are essential for immune surveillance and cell adhesion. Down-modulates several integrins including ITGA1, ITGA2, ITGA3, ITGA4, ITGA5, ITGA6, ITGAV and ITGB1. This decrease in cell adhesion molecules may lead to cell detachment, contributing to the disruption of blood vessel integrity and hemorrhages developed during infection (cytotoxicity). Interacts with host TLR4 and thereby stimulates the differentiation and activation of monocytes leading to bystander death of T-lymphocytes. Down-regulates as well the function of host natural killer cells. Counteracts the antiviral effect of host BST2/tetherin that restricts release of progeny virions from infected cells. However, cooperates with VP40 and host BST2 to activate canonical NF-kappa-B pathway in a manner dependent on neddylation. Functions as a decoy for anti-GP1,2 antibodies thereby contributing to viral immune evasion. Interacts and activates host macrophages and dendritic cells inducing up-regulation of cytokine transcription. This effect is mediated throught activation of host TLR4. Functionally, responsible for binding to the receptor(s) on target cells. Interacts with CD209/DC-SIGN and CLEC4M/DC-SIGNR which act as cofactors for virus entry into dendritic cells (DCs) and endothelial cells. Binding to the macrophage specific lectin CLEC10A also seems to enhance virus infectivity. Interaction with FOLR1/folate receptor alpha may be a cofactor for virus entry in some cell types, although results are contradictory. Members of the Tyro3 receptor tyrosine kinase family also seem to be cell entry factors in filovirus infection. Once attached, the virions are internalized through clathrin-dependent endocytosis and/or macropinocytosis. After internalization of the virus into the endosomes of the host cell, proteolysis of GP1 by two cysteine proteases, CTSB/cathepsin B and CTSL/cathepsin L removes the glycan cap and allows GP1 binding to the host entry receptor NPC1. NPC1-binding, Ca(2+) and acidic pH induce a conformational change of GP2, which unmasks its fusion peptide and permit membranes fusion. In terms of biological role, acts as a class I viral fusion protein. Under the current model, the protein has at least 3 conformational states: pre-fusion native state, pre-hairpin intermediate state, and post-fusion hairpin state. During viral and target cell membrane fusion, the coiled coil regions (heptad repeats) assume a trimer-of-hairpins structure, positioning the fusion peptide in close proximity to the C-terminal region of the ectodomain. The formation of this structure appears to drive apposition and subsequent fusion of viral and target cell membranes. Responsible for penetration of the virus into the cell cytoplasm by mediating the fusion of the membrane of the endocytosed virus particle with the endosomal membrane. Low pH in endosomes induces an irreversible conformational change in GP2, releasing the fusion hydrophobic peptide. This chain is Envelope glycoprotein (GP), found in Reston ebolavirus (strain Philippines-96) (REBOV).